Consider the following 132-residue polypeptide: Protein FAM174C (132 aa).

Residues 1–26 (MGPRVLQPPLLLLLLALLLAALPCGA) form the signal peptide. The interval 34-66 (PAQVTLSPPPAVTNGSQPGAPHNSTHTRPPGAS) is disordered. Residues 46-60 (TNGSQPGAPHNSTHT) are compositionally biased toward polar residues. Asn-47 carries N-linked (GlcNAc...) asparagine glycosylation. Residues 73–93 (SFYVILGFCGLTALYFLIRAF) form a helical membrane-spanning segment. Position 113 is a phosphothreonine (Thr-113). Positions 113–132 (TEMASLDSDEETVFESRNLR) are disordered. 2 positions are modified to phosphoserine: Ser-117 and Ser-120.

The protein belongs to the FAM174 family.

It is found in the membrane. This chain is Protein FAM174C, found in Homo sapiens (Human).